A 184-amino-acid chain; its full sequence is Peptidyl-tRNA hydrolase (184 aa).

Tyr14 is a tRNA binding site. Residue His19 is the Proton acceptor of the active site. Positions 64, 66, and 112 each coordinate tRNA.

This sequence belongs to the PTH family. As to quaternary structure, monomer.

Its subcellular location is the cytoplasm. It catalyses the reaction an N-acyl-L-alpha-aminoacyl-tRNA + H2O = an N-acyl-L-amino acid + a tRNA + H(+). Functionally, hydrolyzes ribosome-free peptidyl-tRNAs (with 1 or more amino acids incorporated), which drop off the ribosome during protein synthesis, or as a result of ribosome stalling. In terms of biological role, catalyzes the release of premature peptidyl moieties from peptidyl-tRNA molecules trapped in stalled 50S ribosomal subunits, and thus maintains levels of free tRNAs and 50S ribosomes. This chain is Peptidyl-tRNA hydrolase, found in Listeria innocua serovar 6a (strain ATCC BAA-680 / CLIP 11262).